Consider the following 259-residue polypeptide: uncharacterized protein (259 aa).

In terms of domain architecture, ABC transporter spans 4-248 (LQTTNLSKTY…SILDTLSVLG (245 aa)). 42 to 49 (GPSGSGKT) contributes to the ATP binding site.

Belongs to the ABC transporter superfamily.

This is an uncharacterized protein from Bacillus subtilis (strain 168).